The primary structure comprises 433 residues: Enolase (433 aa).

(2R)-2-phosphoglycerate is bound at residue Gln-167. Residue Glu-209 is the Proton donor of the active site. Positions 246, 291, and 318 each coordinate Mg(2+). Residues Lys-343, Arg-372, Ser-373, and Lys-394 each contribute to the (2R)-2-phosphoglycerate site. Lys-343 acts as the Proton acceptor in catalysis.

This sequence belongs to the enolase family. In terms of assembly, component of the RNA degradosome, a multiprotein complex involved in RNA processing and mRNA degradation. The cofactor is Mg(2+).

The protein resides in the cytoplasm. It is found in the secreted. It localises to the cell surface. The catalysed reaction is (2R)-2-phosphoglycerate = phosphoenolpyruvate + H2O. It participates in carbohydrate degradation; glycolysis; pyruvate from D-glyceraldehyde 3-phosphate: step 4/5. Catalyzes the reversible conversion of 2-phosphoglycerate (2-PG) into phosphoenolpyruvate (PEP). It is essential for the degradation of carbohydrates via glycolysis. The protein is Enolase of Shewanella frigidimarina (strain NCIMB 400).